The primary structure comprises 290 residues: Pyridoxal 5'-phosphate synthase subunit PdxS (290 aa).

D-ribose 5-phosphate is bound at residue aspartate 22. Lysine 79 acts as the Schiff-base intermediate with D-ribose 5-phosphate in catalysis. Glycine 151 provides a ligand contact to D-ribose 5-phosphate. Position 163 (arginine 163) interacts with D-glyceraldehyde 3-phosphate. D-ribose 5-phosphate-binding positions include glycine 212 and 233–234; that span reads GS.

This sequence belongs to the PdxS/SNZ family. In the presence of PdxT, forms a dodecamer of heterodimers.

It carries out the reaction aldehydo-D-ribose 5-phosphate + D-glyceraldehyde 3-phosphate + L-glutamine = pyridoxal 5'-phosphate + L-glutamate + phosphate + 3 H2O + H(+). Its pathway is cofactor biosynthesis; pyridoxal 5'-phosphate biosynthesis. Functionally, catalyzes the formation of pyridoxal 5'-phosphate from ribose 5-phosphate (RBP), glyceraldehyde 3-phosphate (G3P) and ammonia. The ammonia is provided by the PdxT subunit. Can also use ribulose 5-phosphate and dihydroxyacetone phosphate as substrates, resulting from enzyme-catalyzed isomerization of RBP and G3P, respectively. The protein is Pyridoxal 5'-phosphate synthase subunit PdxS of Clostridium botulinum (strain Langeland / NCTC 10281 / Type F).